The primary structure comprises 228 residues: Phosphoglycolate phosphatase (228 aa).

The active-site Nucleophile is Asp9. Asp9 and Asp11 together coordinate Mg(2+). Lys151 contributes to the substrate binding site. Residues Asp174 and Asp178 each coordinate Mg(2+).

Belongs to the archaeal SPP-like hydrolase family. Mg(2+) serves as cofactor.

The catalysed reaction is 2-phosphoglycolate + H2O = glycolate + phosphate. Its function is as follows. Catalyzes the dephosphorylation of 2-phosphoglycolate. This Pyrobaculum islandicum (strain DSM 4184 / JCM 9189 / GEO3) protein is Phosphoglycolate phosphatase.